Here is a 334-residue protein sequence, read N- to C-terminus: GTPase Obg (334 aa).

The 159-residue stretch at 1–159 (MKFVDSASVR…REIGLELSVM (159 aa)) folds into the Obg domain. The region spanning 160–332 (ADIGLLGIPN…LVAGLFKLVL (173 aa)) is the OBG-type G domain. Residues 166-173 (GIPNAGKS), 191-195 (FTTLH), 212-215 (DIPG), 282-285 (NKID), and 313-315 (SAL) each bind GTP. S173 and T193 together coordinate Mg(2+).

This sequence belongs to the TRAFAC class OBG-HflX-like GTPase superfamily. OBG GTPase family. In terms of assembly, monomer. Requires Mg(2+) as cofactor.

It localises to the cytoplasm. In terms of biological role, an essential GTPase which binds GTP, GDP and possibly (p)ppGpp with moderate affinity, with high nucleotide exchange rates and a fairly low GTP hydrolysis rate. Plays a role in control of the cell cycle, stress response, ribosome biogenesis and in those bacteria that undergo differentiation, in morphogenesis control. The protein is GTPase Obg of Vesicomyosocius okutanii subsp. Calyptogena okutanii (strain HA).